A 481-amino-acid chain; its full sequence is ATP synthase subunit beta, chloroplastic (481 aa).

Residue 163-170 (GGAGVGKT) coordinates ATP.

It belongs to the ATPase alpha/beta chains family. As to quaternary structure, F-type ATPases have 2 components, CF(1) - the catalytic core - and CF(0) - the membrane proton channel. CF(1) has five subunits: alpha(3), beta(3), gamma(1), delta(1), epsilon(1). CF(0) has four main subunits: a(1), b(1), b'(1) and c(9-12).

Its subcellular location is the plastid. The protein localises to the chloroplast thylakoid membrane. The catalysed reaction is ATP + H2O + 4 H(+)(in) = ADP + phosphate + 5 H(+)(out). Produces ATP from ADP in the presence of a proton gradient across the membrane. The catalytic sites are hosted primarily by the beta subunits. In Tupiella akineta (Green alga), this protein is ATP synthase subunit beta, chloroplastic.